We begin with the raw amino-acid sequence, 461 residues long: Cysteine--tRNA ligase (461 aa).

C28 lines the Zn(2+) pocket. The 'HIGH' region motif lies at 30–40; the sequence is ITVYDLCHIGH. Positions 209, 234, and 238 each coordinate Zn(2+). Positions 266 to 270 match the 'KMSKS' region motif; the sequence is KMSKS. K269 is a binding site for ATP.

The protein belongs to the class-I aminoacyl-tRNA synthetase family. In terms of assembly, monomer. Zn(2+) serves as cofactor.

The protein localises to the cytoplasm. It carries out the reaction tRNA(Cys) + L-cysteine + ATP = L-cysteinyl-tRNA(Cys) + AMP + diphosphate. This is Cysteine--tRNA ligase from Escherichia fergusonii (strain ATCC 35469 / DSM 13698 / CCUG 18766 / IAM 14443 / JCM 21226 / LMG 7866 / NBRC 102419 / NCTC 12128 / CDC 0568-73).